Consider the following 486-residue polypeptide: Ribosomal RNA small subunit methyltransferase F (486 aa).

S-adenosyl-L-methionine-binding positions include 124 to 130 (ASAPGSK), glutamate 148, aspartate 175, and aspartate 193. Cysteine 246 functions as the Nucleophile in the catalytic mechanism.

It belongs to the class I-like SAM-binding methyltransferase superfamily. RsmB/NOP family.

The protein localises to the cytoplasm. It catalyses the reaction cytidine(1407) in 16S rRNA + S-adenosyl-L-methionine = 5-methylcytidine(1407) in 16S rRNA + S-adenosyl-L-homocysteine + H(+). In terms of biological role, specifically methylates the cytosine at position 1407 (m5C1407) of 16S rRNA. In Shewanella putrefaciens (strain CN-32 / ATCC BAA-453), this protein is Ribosomal RNA small subunit methyltransferase F.